We begin with the raw amino-acid sequence, 232 residues long: DNA repair protein RecO (232 aa).

This sequence belongs to the RecO family.

In terms of biological role, involved in DNA repair and RecF pathway recombination. This chain is DNA repair protein RecO, found in Francisella tularensis subsp. novicida (strain U112).